Consider the following 162-residue polypeptide: ATP synthase subunit b (162 aa).

Residues 6–25 form a helical membrane-spanning segment; the sequence is TLFTLVTFLVLMLAVGKVAW.

This sequence belongs to the ATPase B chain family. As to quaternary structure, F-type ATPases have 2 components, F(1) - the catalytic core - and F(0) - the membrane proton channel. F(1) has five subunits: alpha(3), beta(3), gamma(1), delta(1), epsilon(1). F(0) has three main subunits: a(1), b(2) and c(10-14). The alpha and beta chains form an alternating ring which encloses part of the gamma chain. F(1) is attached to F(0) by a central stalk formed by the gamma and epsilon chains, while a peripheral stalk is formed by the delta and b chains.

It is found in the cell membrane. Functionally, f(1)F(0) ATP synthase produces ATP from ADP in the presence of a proton or sodium gradient. F-type ATPases consist of two structural domains, F(1) containing the extramembraneous catalytic core and F(0) containing the membrane proton channel, linked together by a central stalk and a peripheral stalk. During catalysis, ATP synthesis in the catalytic domain of F(1) is coupled via a rotary mechanism of the central stalk subunits to proton translocation. Component of the F(0) channel, it forms part of the peripheral stalk, linking F(1) to F(0). The protein is ATP synthase subunit b of Lacticaseibacillus paracasei (strain ATCC 334 / BCRC 17002 / CCUG 31169 / CIP 107868 / KCTC 3260 / NRRL B-441) (Lactobacillus paracasei).